A 242-amino-acid polypeptide reads, in one-letter code: Cysteine-rich venom protein helothermine (242 aa).

The signal sequence occupies residues 1–19 (MILLSLYLCLAAMLHQSEG). The 129-residue stretch at 41-169 (DKHNNLRRIV…TYKYYQVCQY (129 aa)) folds into the SCP domain. Intrachain disulfides connect Cys-77–Cys-155, Cys-94–Cys-170, Cys-150–Cys-167, Cys-189–Cys-196, Cys-192–Cys-201, Cys-205–Cys-237, Cys-214–Cys-231, and Cys-223–Cys-235. In terms of domain architecture, ShKT spans 205–237 (CKQNDVYNNCPDLKKQVGCGHPIMKDCMATCKC).

The protein belongs to the CRISP family. As to expression, expressed by the venom gland.

It is found in the secreted. Functionally, alters a variety of ion channel activities, including voltage-gated potassium channels (Kv), voltage-gated calcium channels (L-, N-, and P-type) (Cav) and ryanodine receptors (RyR). Is toxic to mice (causes lethargy, partial paralysis of rear limbs and lowering of body temperature). The sequence is that of Cysteine-rich venom protein helothermine from Heloderma horridum horridum (Mexican beaded lizard).